The following is a 389-amino-acid chain: Succinate--CoA ligase [ADP-forming] subunit beta (389 aa).

Residues 9 to 244 form the ATP-grasp domain; it reads KQLLAEYGIP…KTQEDETEVT (236 aa). ATP is bound by residues Lys46, 53 to 55, Gly102, and Glu107; that span reads GRG. Mg(2+)-binding residues include Asn199 and Asp213. Substrate contacts are provided by residues Asn264 and 321 to 323; that span reads GIV.

The protein belongs to the succinate/malate CoA ligase beta subunit family. Heterotetramer of two alpha and two beta subunits. Mg(2+) is required as a cofactor.

The catalysed reaction is succinate + ATP + CoA = succinyl-CoA + ADP + phosphate. It catalyses the reaction GTP + succinate + CoA = succinyl-CoA + GDP + phosphate. Its pathway is carbohydrate metabolism; tricarboxylic acid cycle; succinate from succinyl-CoA (ligase route): step 1/1. Functionally, succinyl-CoA synthetase functions in the citric acid cycle (TCA), coupling the hydrolysis of succinyl-CoA to the synthesis of either ATP or GTP and thus represents the only step of substrate-level phosphorylation in the TCA. The beta subunit provides nucleotide specificity of the enzyme and binds the substrate succinate, while the binding sites for coenzyme A and phosphate are found in the alpha subunit. The polypeptide is Succinate--CoA ligase [ADP-forming] subunit beta (Xanthomonas euvesicatoria pv. vesicatoria (strain 85-10) (Xanthomonas campestris pv. vesicatoria)).